A 451-amino-acid chain; its full sequence is DNA polymerase delta subunit 3 (451 aa).

Disordered regions lie at residues 187–241, 259–386, and 404–451; these read SQAK…AASS, KQTP…KVLR, and AWES…FAKK. A compositionally biased stretch (polar residues) spans 200–216; sequence PSTSQVKEAPKASQTVE. Low complexity predominate over residues 225–241; that stretch reads SAPAKKGSSAPKSAASS. Over residues 306–316 the composition is skewed to basic and acidic residues; the sequence is QREEELRRMME. A compositionally biased stretch (acidic residues) spans 329 to 353; sequence EEEEEEEEEEESEHEQLPAEEEPMA. Residues 354–366 show a composition bias toward basic and acidic residues; that stretch reads EEPKAPEPVKEEP. Basic residues predominate over residues 376 to 386; the sequence is GRRRGKRKVLR. The PIP-box signature appears at 441-448; it reads QGSIMSWF.

Component of the DNA polymerase delta complex which consists of PolD1, PolD2, PolD3 and PolD4, with PolD1 bearing DNA polymerase and 3' to 5' proofreading exonuclease activities. Directly interacts with PCNA.

It localises to the nucleus. Accessory component of the DNA polymerase delta complex. The complex is required for the maintenance of genome integrity, acting in concert with the sliding clamp processivity factor PCNA. The protein is DNA polymerase delta subunit 3 of Chaetomium thermophilum (strain DSM 1495 / CBS 144.50 / IMI 039719) (Thermochaetoides thermophila).